The chain runs to 316 residues: ATP synthase gamma chain (316 aa).

This sequence belongs to the ATPase gamma chain family. As to quaternary structure, F-type ATPases have 2 components, CF(1) - the catalytic core - and CF(0) - the membrane proton channel. CF(1) has five subunits: alpha(3), beta(3), gamma(1), delta(1), epsilon(1). CF(0) has three main subunits: a, b and c.

The protein localises to the cellular thylakoid membrane. Functionally, produces ATP from ADP in the presence of a proton gradient across the membrane. The gamma chain is believed to be important in regulating ATPase activity and the flow of protons through the CF(0) complex. This chain is ATP synthase gamma chain, found in Synechococcus sp. (strain WH7803).